Here is a 183-residue protein sequence, read N- to C-terminus: Probable transcription termination protein NusA (183 aa).

In terms of domain architecture, KH spans 32 to 98 (DERVAFIVKE…DDVWVKRVGK (67 aa)). Residues 149 to 183 (RKRAKRPVVKDQQQEQTETKQETDVQQDVKETVKE) form a disordered region. The span at 156-183 (VVKDQQQEQTETKQETDVQQDVKETVKE) shows a compositional bias: basic and acidic residues.

It belongs to the NusA family.

It is found in the cytoplasm. Its function is as follows. Participates in transcription termination. In Methanocaldococcus jannaschii (strain ATCC 43067 / DSM 2661 / JAL-1 / JCM 10045 / NBRC 100440) (Methanococcus jannaschii), this protein is Probable transcription termination protein NusA.